A 605-amino-acid chain; its full sequence is Pescadillo homolog (605 aa).

The region spanning 346–440 (PVATLFSEFV…ELVPANLYLP (95 aa)) is the BRCT domain. The interval 449 to 553 (SPWGDSTGYD…RKATEEEEEK (105 aa)) is disordered. Acidic residues predominate over residues 461–508 (AENDEDVEGSDAEEIDESADEDAESEEVEEDDTAAVALNEDDEDDEDE). Residues 526–537 (EAKDVIDSESSD) show a composition bias toward basic and acidic residues. Residues 533–605 (SESSDKKKKK…KAKLAKLDKK (73 aa)) are a coiled coil.

This sequence belongs to the pescadillo family. In terms of assembly, component of the NOP7 complex, composed of ERB1, NOP7 and YTM1. The complex is held together by ERB1, which interacts with NOP7 via its N-terminal domain and with YTM1 via a high-affinity interaction between the seven-bladed beta-propeller domains of the 2 proteins. The NOP7 complex associates with the 66S pre-ribosome.

The protein resides in the nucleus. Its subcellular location is the nucleolus. It localises to the nucleoplasm. Functionally, component of the NOP7 complex, which is required for maturation of the 25S and 5.8S ribosomal RNAs and formation of the 60S ribosome. In Kluyveromyces lactis (strain ATCC 8585 / CBS 2359 / DSM 70799 / NBRC 1267 / NRRL Y-1140 / WM37) (Yeast), this protein is Pescadillo homolog.